Consider the following 66-residue polypeptide: Large ribosomal subunit protein bL33c (66 aa).

This sequence belongs to the bacterial ribosomal protein bL33 family.

The protein localises to the plastid. Its subcellular location is the chloroplast. The protein is Large ribosomal subunit protein bL33c of Phalaenopsis aphrodite subsp. formosana (Moth orchid).